The sequence spans 177 residues: MASHDQSYKAGETMGRTEEKTNQMIGNIEDKAQAAKEKAQQAAQTAKDKTSQTAQAAKEKTQQTAQAAKEKTQQTAQAAKDETQQTAQAAKDKTQQTTEATKEKAQDTTGRAREKGSEMGQSTKETAQSGKDNSAGFLQQTGEKVKGMAQGATDAVKQTFGMANDDKDKDHFPTNRH.

Residues 1–177 (MASHDQSYKA…DKDHFPTNRH (177 aa)) form a disordered region. Residues 28–39 (IEDKAQAAKEKA) show a composition bias toward basic and acidic residues. Residues 40–89 (QQAAQTAKDKTSQTAQAAKEKTQQTAQAAKEKTQQTAQAAKDETQQTAQA) show a composition bias toward low complexity. Tandem repeats lie at residues 53 to 63 (TAQAAKEKTQQ), 64 to 74 (TAQAAKEKTQQ), 75 to 85 (TAQAAKDETQQ), and 86 to 96 (TAQAAKDKTQQ). The segment at 53 to 96 (TAQAAKEKTQQTAQAAKEKTQQTAQAAKDETQQTAQAAKDKTQQ) is 4 X 11 AA approximate tandem repeats of T-A-Q-A-A-K-E-K-T-Q-Q. The span at 90 to 117 (AKDKTQQTTEATKEKAQDTTGRAREKGS) shows a compositional bias: basic and acidic residues. The span at 119-142 (MGQSTKETAQSGKDNSAGFLQQTG) shows a compositional bias: polar residues. Residues 164-177 (NDDKDKDHFPTNRH) show a composition bias toward basic and acidic residues.

The protein belongs to the LEA type 4 family. As to expression, highest expression is found in seeds. No expression detected in adult tissues.

This chain is Late embryogenesis abundant protein 1, found in Cicer arietinum (Chickpea).